The primary structure comprises 350 residues: Dauer larva development regulatory growth factor daf-7 (350 aa).

The N-terminal stretch at 1-21 (MFMASSLPVFIFLLSLPHGLT) is a signal peptide. Residues 22 to 234 (FNCTNSGVCI…TRPKGSRKRR (213 aa)) constitute a propeptide that is removed on maturation. Asn23 is a glycosylation site (N-linked (GlcNAc...) asparagine). 4 disulfide bridges follow: Cys241–Cys251, Cys250–Cys315, Cys278–Cys347, and Cys282–Cys349.

The protein belongs to the TGF-beta family. In terms of tissue distribution, expressed in the chemosensory neurons, including in the ASJ neurons in males. Expressed in the ASI neurons.

The protein resides in the secreted. In terms of biological role, under harsh environmental conditions, larvae enter a developmentally arrested state known as dauer; TGF-beta-like daf-7 acts to inhibit dauer larva formation and promote growth. May be a ligand to cell surface receptor daf-4. May act as a negative regulator of dauer larva development by transducing chemosensory information from ASI neurons. Involved in sensitivity to CO2 levels. Involved in mate searching behavior of males, acting in concert with the neuropeptide pdf-1. In AWC neurons, acts to promote expression of srsx-3, a member of the GPCR family. The chain is Dauer larva development regulatory growth factor daf-7 from Caenorhabditis elegans.